The primary structure comprises 400 residues: LIM/homeobox protein Lhx3 (400 aa).

LIM zinc-binding domains lie at 34–84 (CAGC…CKDD) and 93–147 (CAAC…CKAD). Ser-74 carries the post-translational modification Phosphoserine. Positions 160-219 (AKRPRTTITAKQLETLKSAYNTSPKPARHVREQLSSETGLDMRVVQVWFQNRRAKEKRLK) form a DNA-binding region, homeobox. Disordered regions lie at residues 215-280 (EKRL…SSLG) and 297-400 (TLDH…HAQF). Tyr-230 carries the phosphotyrosine modification. Phosphoserine occurs at positions 237 and 241. Pro residues-rich tracts occupy residues 319-334 (GIPPSPAAPQSLPGPQ) and 352-361 (SGPPGGPPPM). Polar residues predominate over residues 368–380 (GPSSDLSTESSSG).

As to quaternary structure, interacts with POU1F1. At neuronal promoters, interacts with LDB1, in motor neurons LDB1 is displaced by ISL1 and a ternary complex is formed in which ISL1 contacts both LHX3 and LDB1; allosteric structural changes in the DNA binding domain of LHX3, induced by the ISL1-LHX3 interaction, may explain differences in sequence specificity of the different complexes. Interacts with LDB2. May interact with CITED2/MRG1. Mostly expressed in the pituitary anterior and intermediate lobes. It is also expressed in the pineal gland and transiently in the primordia of motor neurons including the spinal cord, pons and medulla oblongata.

The protein localises to the nucleus. Transcription factor. Recognizes and binds to the consensus sequence motif 5'-AATTAATTA-3' in the regulatory elements of target genes, such as glycoprotein hormones alpha chain CGA and visual system homeobox CHX10, positively modulating transcription; transcription can be co-activated by LDB2. Synergistically enhances transcription from the prolactin promoter in cooperation with POU1F1/Pit-1. Required for the establishment of the specialized cells of the pituitary gland and the nervous system. Involved in the development of interneurons and motor neurons in cooperation with LDB1 and ISL1. This chain is LIM/homeobox protein Lhx3 (Lhx3), found in Mus musculus (Mouse).